Reading from the N-terminus, the 319-residue chain is Tetrahydromethanopterin S-methyltransferase subunit H (319 aa).

The protein belongs to the MtrH family. In terms of assembly, the complex is composed of 8 subunits; MtrA, MtrB, MtrC, MtrD, MtrE, MtrF, MtrG and MtrH.

It catalyses the reaction 5-methyl-5,6,7,8-tetrahydromethanopterin + coenzyme M + 2 Na(+)(in) = 5,6,7,8-tetrahydromethanopterin + methyl-coenzyme M + 2 Na(+)(out). Its pathway is one-carbon metabolism; methanogenesis from CO(2); methyl-coenzyme M from 5,10-methylene-5,6,7,8-tetrahydromethanopterin: step 2/2. Functionally, part of a complex that catalyzes the formation of methyl-coenzyme M and tetrahydromethanopterin from coenzyme M and methyl-tetrahydromethanopterin. This is an energy-conserving, sodium-ion translocating step. MtrH catalyzes the transfer of the methyl group from methyl-tetrahydromethanopterin to the corrinoid prosthetic group of MtrA. In Methanococcus vannielii (strain ATCC 35089 / DSM 1224 / JCM 13029 / OCM 148 / SB), this protein is Tetrahydromethanopterin S-methyltransferase subunit H.